The sequence spans 129 residues: Thioredoxin H7 (129 aa).

The Thioredoxin domain occupies 6–129 (SSVHDVHSSM…LVKKIEQHRV (124 aa)). Residues cysteine 55 and cysteine 58 each act as nucleophile in the active site. A disulfide bond links cysteine 55 and cysteine 58.

Belongs to the thioredoxin family. Plant H-type subfamily.

The protein resides in the cytoplasm. Its function is as follows. Probable thiol-disulfide oxidoreductase that may be involved in the redox regulation of a number of cytosolic enzymes. The protein is Thioredoxin H7 (TRX7) of Arabidopsis thaliana (Mouse-ear cress).